The chain runs to 95 residues: AESCDPYQACVLLSAEGRRVPLCSCAGRDCPNTDSHKIQSMYFCEDVSVVYACPDTDRVAIQIINGVGNIDFKLFCRCHTYEAHRSYFSCAELIG.

Post-translationally, contains 5 disulfide bonds. In terms of tissue distribution, expressed by the venom duct.

Its subcellular location is the secreted. Acts as a neurotoxin by inhibiting an ion channel. The sequence is that of Turripeptide OL184 from Iotyrris olangoensis (Sea snail).